The sequence spans 247 residues: Membrane-spanning 4-domains subfamily A member 6D (247 aa).

Residues 1 to 46 (MIPQVVTSETVTVISPNGISFPQTDKPQPSHQSQDSLKKHLKAEIK) are Cytoplasmic-facing. The chain crosses the membrane as a helical span at residues 47-67 (VMAAIQIMCAVMVLSLGIILA). Over 68–80 (SVPSNLHFTSVFS) the chain is Extracellular. Residues 81–101 (ILLESGYPFVGALFFAISGIL) traverse the membrane as a helical segment. Over 102–121 (SIVTEKKMTKPLVHSSLALS) the chain is Cytoplasmic. A helical membrane pass occupies residues 122–142 (ILSVLSALTGIAILSVSLAAL). Residues 143 to 180 (EPALQQCKLAFTQLDTTQDAYHFFSPEPLNSCFVAKAA) are Extracellular-facing. A helical membrane pass occupies residues 181–201 (LTGVFSLMLISSVLELGLAVL). Over 202–247 (TATLWWKQSSSAFSGNVIFLSQNSKNKSSVSSESLCNPTYENILTS) the chain is Cytoplasmic. The residue at position 235 (serine 235) is a Phosphoserine.

This sequence belongs to the MS4A family. In terms of tissue distribution, expressed in thymus, spleen, intestine, colon, testis, heart, liver, brain, kidney, peripheral lymph node and bone marrow.

It is found in the membrane. In terms of biological role, may be involved in signal transduction as a component of a multimeric receptor complex. The sequence is that of Membrane-spanning 4-domains subfamily A member 6D (Ms4a6d) from Mus musculus (Mouse).